The following is a 137-amino-acid chain: Peptide methionine sulfoxide reductase MsrB (137 aa).

The 123-residue stretch at 7–129 folds into the MsrB domain; that stretch reads PEELKNGLSE…NSASLSFTDE (123 aa). Positions 46, 49, 95, and 98 each coordinate Zn(2+). C118 acts as the Nucleophile in catalysis.

This sequence belongs to the MsrB Met sulfoxide reductase family. It depends on Zn(2+) as a cofactor.

The catalysed reaction is L-methionyl-[protein] + [thioredoxin]-disulfide + H2O = L-methionyl-(R)-S-oxide-[protein] + [thioredoxin]-dithiol. This chain is Peptide methionine sulfoxide reductase MsrB, found in Klebsiella pneumoniae subsp. pneumoniae (strain ATCC 700721 / MGH 78578).